A 335-amino-acid polypeptide reads, in one-letter code: N-acetyl-gamma-glutamyl-phosphate reductase (335 aa).

The active site involves C156.

This sequence belongs to the NAGSA dehydrogenase family. Type 1 subfamily.

It localises to the cytoplasm. It catalyses the reaction N-acetyl-L-glutamate 5-semialdehyde + phosphate + NADP(+) = N-acetyl-L-glutamyl 5-phosphate + NADPH + H(+). It participates in amino-acid biosynthesis; L-arginine biosynthesis; N(2)-acetyl-L-ornithine from L-glutamate: step 3/4. In terms of biological role, catalyzes the NADPH-dependent reduction of N-acetyl-5-glutamyl phosphate to yield N-acetyl-L-glutamate 5-semialdehyde. In Aeromonas salmonicida (strain A449), this protein is N-acetyl-gamma-glutamyl-phosphate reductase.